Consider the following 492-residue polypeptide: Spore germination protein XA (492 aa).

The next 7 membrane-spanning stretches (helical) occupy residues 246–266 (FILLVDGSPTATIAPVSFPFF), 285–305 (LLSLFGIAISIFLPGFWVALV), 325–345 (EGIPFPAPLEGMIMITLFELL), 353–373 (PAAFGQTLSVVGGLIIGQAAI), 377–397 (FVSPSMVVMIAISVVSTFTLV), 413–433 (FLMSSFLGIVGFICSILLIVI), and 442–462 (GLPFLAPYSPPVFSSMLPSTF).

The protein belongs to the GerABKA family.

It is found in the cell membrane. Functionally, may allow B.anthracis to germinate within phagocytic cells and therefore involved in virulence. The sequence is that of Spore germination protein XA (gerXA) from Bacillus anthracis.